Consider the following 138-residue polypeptide: Small ribosomal subunit protein uS11c (138 aa).

Belongs to the universal ribosomal protein uS11 family. Part of the 30S ribosomal subunit.

The protein resides in the plastid. The sequence is that of Small ribosomal subunit protein uS11c from Cuscuta gronovii (Common dodder).